The following is a 296-amino-acid chain: 4-amino-4-deoxyprephenate dehydrogenase (296 aa).

The 280-residue stretch at 9–288 (RCVVVGGAGA…EHGAELERLC (280 aa)) folds into the Prephenate/arogenate dehydrogenase domain.

The protein belongs to the prephenate/arogenate dehydrogenase family.

The enzyme catalyses 4-amino-4-deoxyprephenate + NAD(+) = 3-(4-aminophenyl)pyruvate + CO2 + NADH + H(+). Its pathway is antibiotic biosynthesis. Functionally, involved in pristinamycin I biosynthesis. Probably catalyzes the formation of 3-(4-aminophenyl)pyruvate from 4-amino-4-deoxyprephenate. The protein is 4-amino-4-deoxyprephenate dehydrogenase of Streptomyces pristinaespiralis.